We begin with the raw amino-acid sequence, 522 residues long: Anthranilate synthase component 1 (522 aa).

L-tryptophan-binding positions include Ser-40 and 292 to 294; that span reads PYM. Position 329–330 (329–330) interacts with chorismate; that stretch reads GT. Glu-362 is a Mg(2+) binding site. Chorismate-binding positions include Tyr-450, Arg-470, 484 to 486, and Gly-486; that span reads GAG. Glu-499 contacts Mg(2+).

This sequence belongs to the anthranilate synthase component I family. In terms of assembly, heterotetramer consisting of two non-identical subunits: a beta subunit (TrpG) and a large alpha subunit (TrpE). It depends on Mg(2+) as a cofactor.

It catalyses the reaction chorismate + L-glutamine = anthranilate + pyruvate + L-glutamate + H(+). Its pathway is amino-acid biosynthesis; L-tryptophan biosynthesis; L-tryptophan from chorismate: step 1/5. With respect to regulation, feedback inhibited by tryptophan. Its function is as follows. Part of a heterotetrameric complex that catalyzes the two-step biosynthesis of anthranilate, an intermediate in the biosynthesis of L-tryptophan. In the first step, the glutamine-binding beta subunit (TrpG) of anthranilate synthase (AS) provides the glutamine amidotransferase activity which generates ammonia as a substrate that, along with chorismate, is used in the second step, catalyzed by the large alpha subunit of AS (TrpE) to produce anthranilate. In the absence of TrpG, TrpE can synthesize anthranilate directly from chorismate and high concentrations of ammonia. This chain is Anthranilate synthase component 1 (trpE), found in Buchnera aphidicola subsp. Baizongia pistaciae (strain Bp).